The primary structure comprises 364 residues: tRNA/tmRNA (uracil-C(5))-methyltransferase (364 aa).

S-adenosyl-L-methionine contacts are provided by Gln189, Tyr216, Asn221, Glu237, and Asp297. Residue Cys322 is the Nucleophile of the active site. Glu356 serves as the catalytic Proton acceptor.

This sequence belongs to the class I-like SAM-binding methyltransferase superfamily. RNA M5U methyltransferase family. TrmA subfamily.

It catalyses the reaction uridine(54) in tRNA + S-adenosyl-L-methionine = 5-methyluridine(54) in tRNA + S-adenosyl-L-homocysteine + H(+). It carries out the reaction uridine(341) in tmRNA + S-adenosyl-L-methionine = 5-methyluridine(341) in tmRNA + S-adenosyl-L-homocysteine + H(+). In terms of biological role, dual-specificity methyltransferase that catalyzes the formation of 5-methyluridine at position 54 (m5U54) in all tRNAs, and that of position 341 (m5U341) in tmRNA (transfer-mRNA). This Campylobacter curvus (strain 525.92) protein is tRNA/tmRNA (uracil-C(5))-methyltransferase.